Here is a 337-residue protein sequence, read N- to C-terminus: C5a anaphylatoxin chemotactic receptor 2 (337 aa).

Residues 1–38 (MGNDSVSYEYGDYSDLSDRPVDCLDGACLAIDPLRVAP) are Extracellular-facing. N-linked (GlcNAc...) asparagine glycosylation occurs at asparagine 3. The helical transmembrane segment at 39 to 61 (LPLYAAIFLVGVPGNAMVAWVAG) threads the bilayer. Over 62 to 72 (KVARRRVGATW) the chain is Cytoplasmic. Residues 73–95 (LLHLAVADLLCCLSLPILAVPIA) form a helical membrane-spanning segment. At 96 to 114 (RGGHWPYGAVGCRALPSII) the chain is on the extracellular side. Cysteine 107 and cysteine 186 form a disulfide bridge. A helical membrane pass occupies residues 115-137 (LLTMYASVLLLAALSADLCFLAL). Topologically, residues 138–149 (GPAWWSTVQRAC) are cytoplasmic. A helical transmembrane segment spans residues 150 to 172 (GVQVACGAAWTLALLLTVPSAIY). The Extracellular portion of the chain corresponds to 173-202 (RRLHQEHFPARLQCVVDYGGSSSTENAVTA). The chain crosses the membrane as a helical span at residues 203-225 (IRFLFGFLGPLVAVASCHSALLC). The Cytoplasmic segment spans residues 226-237 (WAARRCRPLGTA). The helical transmembrane segment at 238–260 (IVVGFFVCWAPYHLLGLVLTVAA) threads the bilayer. Over 261-274 (PNSALLARALRAEP) the chain is Extracellular. The chain crosses the membrane as a helical span at residues 275–294 (LIVGLALAHSCLNPMLFLYF). Topologically, residues 295–337 (GRAQLRRSLPAACHWALRESQGQDESVDSKKSTSHDLVSEMEV) are cytoplasmic. Position 320 is a phosphoserine (serine 320).

This sequence belongs to the G-protein coupled receptor 1 family. In terms of assembly, interacts with C3 (the anaphylatoxin peptide C3a and the adipogenic hormone ASP); the interaction occurs with higher affinity for ASP, enhancing the phosphorylation and activation of GPR77, recruitment of ARRB2 to the cell surface and endocytosis of GRP77. As to expression, frontal cortex, hippocampus, hypothalamus, pons and liver.

Its subcellular location is the cell membrane. Receptor for the chemotactic and inflammatory C3a, C4a and C5a anaphylatoxin peptides and also for their dearginated forms ASP/C3adesArg, C4adesArg and C5adesArg respectively. Couples weakly to G(i)-mediated signaling pathways. This chain is C5a anaphylatoxin chemotactic receptor 2 (C5AR2), found in Homo sapiens (Human).